The primary structure comprises 367 residues: Glutamate 5-kinase (367 aa).

ATP is bound at residue Lys10. Residues Ser50, Asp137, and Asn149 each coordinate substrate. Residues 169 to 170 and 211 to 217 contribute to the ATP site; these read TD and TGGMGTK. One can recognise a PUA domain in the interval 275–353; that stretch reads AGEITVDDGA…QEISEILGYE (79 aa).

Belongs to the glutamate 5-kinase family.

It is found in the cytoplasm. It carries out the reaction L-glutamate + ATP = L-glutamyl 5-phosphate + ADP. Its pathway is amino-acid biosynthesis; L-proline biosynthesis; L-glutamate 5-semialdehyde from L-glutamate: step 1/2. With respect to regulation, proline-mediated feedback inhibition. Catalyzes the transfer of a phosphate group to glutamate to form L-glutamate 5-phosphate. The sequence is that of Glutamate 5-kinase from Serratia marcescens.